The primary structure comprises 569 residues: Sialic acid-binding Ig-like lectin 5 (569 aa).

Positions 1-16 (MRWAWLLPLLWAGCLA) are cleaved as a signal peptide. The Extracellular segment spans residues 17–439 (TDGYSLSVTG…KSETSRGTVL (423 aa)). In terms of domain architecture, Ig-like V-type spans 18-116 (DGYSLSVTGS…DTGTYFFRLD (99 aa)). Disulfide bonds link cysteine 35–cysteine 163, cysteine 40–cysteine 96, cysteine 157–cysteine 206, and cysteine 265–cysteine 308. Asparagine 95 carries an N-linked (GlcNAc...) asparagine glycan. Residues arginine 114, lysine 120, and serine 122 each contribute to the N-acetylneuraminate site. Ig-like C2-type domains follow at residues 139-224 (PNIQ…QQLS) and 229-324 (PQKM…VSLS). Residues asparagine 151, asparagine 200, and asparagine 203 are each glycosylated (N-linked (GlcNAc...) asparagine). Asparagine 369, asparagine 372, and asparagine 387 each carry an N-linked (GlcNAc...) asparagine glycan. Residues 440 to 460 (GAIWGAGLMALLAVCLCLIFF) form a helical membrane-spanning segment. The Cytoplasmic portion of the chain corresponds to 461–569 (TVKVLRKKSA…VYTEIKIHKC (109 aa)). Residues 508 to 556 (HLNEPGSQTQKEQPPLATVPDTQKDEPELHYASLSFQGPMPPKPQNTEA) form a disordered region. The ITIM motif motif lies at 536–541 (LHYASL). The short motif at 559-564 (SVYTEI) is the SLAM-like motif element.

This sequence belongs to the immunoglobulin superfamily. SIGLEC (sialic acid binding Ig-like lectin) family. In terms of tissue distribution, predominantly expressed by immature monocytic/myeloid lineage cells in bone marrow. Also found at lower levels in mature neutrophils and monocytes.

The protein resides in the membrane. Its function is as follows. Putative adhesion molecule that mediates sialic-acid dependent binding to cells. Preferentially binds to alpha-2,3-linked sialic acid. The sialic acid recognition site may be masked by cis interactions with sialic acids on the same cell surface. The protein is Sialic acid-binding Ig-like lectin 5 (Siglec5) of Mus musculus (Mouse).